Here is a 410-residue protein sequence, read N- to C-terminus: Serine hydroxymethyltransferase (410 aa).

(6S)-5,6,7,8-tetrahydrofolate contacts are provided by residues Leu116 and 120–122 (GHL). At Lys225 the chain carries N6-(pyridoxal phosphate)lysine. 349 to 351 (SPF) lines the (6S)-5,6,7,8-tetrahydrofolate pocket.

The protein belongs to the SHMT family. In terms of assembly, homodimer. Pyridoxal 5'-phosphate serves as cofactor.

The protein resides in the cytoplasm. It carries out the reaction (6R)-5,10-methylene-5,6,7,8-tetrahydrofolate + glycine + H2O = (6S)-5,6,7,8-tetrahydrofolate + L-serine. Its pathway is one-carbon metabolism; tetrahydrofolate interconversion. It participates in amino-acid biosynthesis; glycine biosynthesis; glycine from L-serine: step 1/1. Functionally, catalyzes the reversible interconversion of serine and glycine with tetrahydrofolate (THF) serving as the one-carbon carrier. This reaction serves as the major source of one-carbon groups required for the biosynthesis of purines, thymidylate, methionine, and other important biomolecules. Also exhibits THF-independent aldolase activity toward beta-hydroxyamino acids, producing glycine and aldehydes, via a retro-aldol mechanism. This chain is Serine hydroxymethyltransferase, found in Leuconostoc mesenteroides subsp. mesenteroides (strain ATCC 8293 / DSM 20343 / BCRC 11652 / CCM 1803 / JCM 6124 / NCDO 523 / NBRC 100496 / NCIMB 8023 / NCTC 12954 / NRRL B-1118 / 37Y).